Here is a 378-residue protein sequence, read N- to C-terminus: Acetylornithine deacetylase (378 aa).

Residue histidine 76 participates in Zn(2+) binding. Residue aspartate 78 is part of the active site. A Zn(2+)-binding site is contributed by aspartate 108. The active site involves glutamate 140. Positions 141, 165, and 351 each coordinate Zn(2+).

Belongs to the peptidase M20A family. ArgE subfamily. In terms of assembly, homodimer. The cofactor is Zn(2+). Co(2+) is required as a cofactor. It depends on glutathione as a cofactor.

It is found in the cytoplasm. It catalyses the reaction N(2)-acetyl-L-ornithine + H2O = L-ornithine + acetate. Its pathway is amino-acid biosynthesis; L-arginine biosynthesis; L-ornithine from N(2)-acetyl-L-ornithine (linear): step 1/1. Catalyzes the hydrolysis of the amide bond of N(2)-acetylated L-amino acids. Cleaves the acetyl group from N-acetyl-L-ornithine to form L-ornithine, an intermediate in L-arginine biosynthesis pathway, and a branchpoint in the synthesis of polyamines. This Vibrio atlanticus (strain LGP32) (Vibrio splendidus (strain Mel32)) protein is Acetylornithine deacetylase.